A 272-amino-acid polypeptide reads, in one-letter code: HMP-PP phosphatase (272 aa).

Residue aspartate 8 is the Nucleophile of the active site. Residues aspartate 8, aspartate 10, and aspartate 212 each contribute to the Mg(2+) site.

It belongs to the HAD-like hydrolase superfamily. Cof family. Mg(2+) serves as cofactor.

It catalyses the reaction 4-amino-2-methyl-5-(diphosphooxymethyl)pyrimidine + H2O = 4-amino-2-methyl-5-(phosphooxymethyl)pyrimidine + phosphate + H(+). Its function is as follows. Catalyzes the hydrolysis of 4-amino-2-methyl-5-hydroxymethylpyrimidine pyrophosphate (HMP-PP) to 4-amino-2-methyl-5-hydroxymethylpyrimidine phosphate (HMP-P). This chain is HMP-PP phosphatase, found in Escherichia fergusonii (strain ATCC 35469 / DSM 13698 / CCUG 18766 / IAM 14443 / JCM 21226 / LMG 7866 / NBRC 102419 / NCTC 12128 / CDC 0568-73).